A 65-amino-acid polypeptide reads, in one-letter code: UPF0434 protein CC_0108 (65 aa).

It belongs to the UPF0434 family.

The chain is UPF0434 protein CC_0108 from Caulobacter vibrioides (strain ATCC 19089 / CIP 103742 / CB 15) (Caulobacter crescentus).